A 311-amino-acid polypeptide reads, in one-letter code: Methionyl-tRNA formyltransferase (311 aa).

109 to 112 (SLLP) contacts (6S)-5,6,7,8-tetrahydrofolate.

This sequence belongs to the Fmt family.

The enzyme catalyses L-methionyl-tRNA(fMet) + (6R)-10-formyltetrahydrofolate = N-formyl-L-methionyl-tRNA(fMet) + (6S)-5,6,7,8-tetrahydrofolate + H(+). Its function is as follows. Attaches a formyl group to the free amino group of methionyl-tRNA(fMet). The formyl group appears to play a dual role in the initiator identity of N-formylmethionyl-tRNA by promoting its recognition by IF2 and preventing the misappropriation of this tRNA by the elongation apparatus. The protein is Methionyl-tRNA formyltransferase of Solibacter usitatus (strain Ellin6076).